A 508-amino-acid chain; its full sequence is uncharacterized protein (508 aa).

12 helical membrane-spanning segments follow: residues 65–87 (IFPV…SYAV), 104–124 (WSGT…SLLL), 136–156 (FLVI…PGFI), 160–180 (VLLG…TAQW), 192–212 (VWVA…YGLA), 224–244 (LIFI…LAVV), 292–312 (TWIM…IGTF), 333–353 (LPAG…SLFI), 357–377 (MVLA…LSFA), 384–404 (LAGY…FAII), 416–436 (TVGV…PQTF), and 450–470 (TMVG…YVNW).

It belongs to the major facilitator superfamily. Allantoate permease family.

The protein resides in the endoplasmic reticulum. Its subcellular location is the golgi apparatus. It is found in the membrane. This is an uncharacterized protein from Schizosaccharomyces pombe (strain 972 / ATCC 24843) (Fission yeast).